Consider the following 267-residue polypeptide: Protein PERCC1 (267 aa).

3 disordered regions span residues 19–88 (HHPF…QLLR), 142–163 (SLEDEDTPEPRVPQGQVCRPGL), and 247–267 (ACPELPGRGTPALEGARPAEA). The segment covering 28-50 (EPPETSEEEEEEEEEEEEEEGEG) has biased composition (acidic residues). Over residues 74–83 (PEGPGSPETP) the composition is skewed to low complexity.

Plays a critical role in intestinal function. Acts by promoting the development of enteroendocrine cells (EECs) of the gastrointestinal tract and pancreas. It is thereby required for normal enteroendocrine peptide hormone secretion. The protein is Protein PERCC1 of Homo sapiens (Human).